Here is a 403-residue protein sequence, read N- to C-terminus: S-adenosylmethionine synthase (403 aa).

Position 16 (histidine 16) interacts with ATP. Aspartate 18 is a Mg(2+) binding site. Glutamate 44 contributes to the K(+) binding site. 2 residues coordinate L-methionine: glutamate 57 and glutamine 100. The flexible loop stretch occupies residues 100–110 (QSPDIAQGVDR). The segment at 106-126 (QGVDRSYESRSGSASTDAHDL) is disordered. ATP is bound by residues 176 to 178 (DGK), 248 to 249 (KF), aspartate 257, 263 to 264 (RK), alanine 280, and lysine 284. Aspartate 257 contacts L-methionine. Lysine 288 serves as a coordination point for L-methionine.

Belongs to the AdoMet synthase family. As to quaternary structure, homotetramer; dimer of dimers. It depends on Mg(2+) as a cofactor. The cofactor is K(+).

Its subcellular location is the cytoplasm. It catalyses the reaction L-methionine + ATP + H2O = S-adenosyl-L-methionine + phosphate + diphosphate. It functions in the pathway amino-acid biosynthesis; S-adenosyl-L-methionine biosynthesis; S-adenosyl-L-methionine from L-methionine: step 1/1. Functionally, catalyzes the formation of S-adenosylmethionine (AdoMet) from methionine and ATP. The overall synthetic reaction is composed of two sequential steps, AdoMet formation and the subsequent tripolyphosphate hydrolysis which occurs prior to release of AdoMet from the enzyme. The protein is S-adenosylmethionine synthase of Clavibacter sepedonicus (Clavibacter michiganensis subsp. sepedonicus).